The sequence spans 83 residues: ATP synthase subunit c (83 aa).

2 helical membrane-spanning segments follow: residues 10-30 (IAVALLIGMGALGTAIGFGLL) and 52-72 (MFIVAGLLDAVTMIGVGIALY).

This sequence belongs to the ATPase C chain family. In terms of assembly, F-type ATPases have 2 components, F(1) - the catalytic core - and F(0) - the membrane proton channel. F(1) has five subunits: alpha(3), beta(3), gamma(1), delta(1), epsilon(1). F(0) has three main subunits: a(1), b(2) and c(10-14). The alpha and beta chains form an alternating ring which encloses part of the gamma chain. F(1) is attached to F(0) by a central stalk formed by the gamma and epsilon chains, while a peripheral stalk is formed by the delta and b chains.

Its subcellular location is the cell inner membrane. F(1)F(0) ATP synthase produces ATP from ADP in the presence of a proton or sodium gradient. F-type ATPases consist of two structural domains, F(1) containing the extramembraneous catalytic core and F(0) containing the membrane proton channel, linked together by a central stalk and a peripheral stalk. During catalysis, ATP synthesis in the catalytic domain of F(1) is coupled via a rotary mechanism of the central stalk subunits to proton translocation. Its function is as follows. Key component of the F(0) channel; it plays a direct role in translocation across the membrane. A homomeric c-ring of between 10-14 subunits forms the central stalk rotor element with the F(1) delta and epsilon subunits. In Shewanella denitrificans (strain OS217 / ATCC BAA-1090 / DSM 15013), this protein is ATP synthase subunit c.